The chain runs to 243 residues: Ice-binding protein K3-B1 (243 aa).

The first 20 residues, 1-20, serve as a signal peptide directing secretion; that stretch reads MFSASSLLAVIALAISSVSA.

It belongs to the ice-binding protein family.

Functionally, binds to the surface of ice crystals. Has low thermal hysteresis (TH) activity, which is the ability to lower the freezing point of an aqueous solution below its melting point. The TH activity of this protein is approximately 0.3 degrees Celsius at 11 mM. In Typhula ishikariensis (Gray snow mold fungus), this protein is Ice-binding protein K3-B1.